Consider the following 86-residue polypeptide: Collagen alpha-1(XII) chain (86 aa).

Pro residues predominate over residues 1–12 (NQPGPPGPPGPP). The tract at residues 1–86 (NQPGPPGPPG…PGRPGDSGIR (86 aa)) is disordered. Pro6, Pro9, Pro12, Pro18, Pro24, Pro27, Pro30, Pro42, Pro51, Pro54, Pro65, Pro74, Pro77, and Pro80 each carry hydroxyproline. A compositionally biased stretch (gly residues) spans 16–25 (GEPGPGGRPG). A compositionally biased stretch (low complexity) spans 35–50 (PQGERGLPGEXGERGL). Low complexity predominate over residues 57–71 (QGESRTGPPGSTGSR).

It belongs to the fibril-associated collagens with interrupted helices (FACIT) family. In terms of assembly, trimer of identical chains each containing 190 kDa of non-triple-helical sequences. In terms of processing, the triple-helical tail is stabilized by disulfide bonds at each end. Prolines at the third position of the tripeptide repeating unit (G-X-Y) are hydroxylated in some or all of the chains.

Its subcellular location is the secreted. It localises to the extracellular space. The protein localises to the extracellular matrix. Functionally, type XII collagen interacts with type I collagen-containing fibrils, the COL1 domain could be associated with the surface of the fibrils, and the COL2 and NC3 domains may be localized in the perifibrillar matrix. This is Collagen alpha-1(XII) chain (COL12A1) from Bos taurus (Bovine).